The primary structure comprises 31 residues: leu operon leader peptide (31 aa).

Involved in control of the biosynthesis of leucine. The chain is leu operon leader peptide (leuL) from Buchnera aphidicola subsp. Rhopalosiphum padi.